A 184-amino-acid polypeptide reads, in one-letter code: Probable N-acetyltransferase san (184 aa).

One can recognise an N-acetyltransferase domain in the interval 6–155 (IELGDVTPHN…DAHVLQKTLR (150 aa)). Tyrosine 31 lines the substrate pocket. Lysine 47 carries the post-translational modification N6-acetyllysine; by autocatalysis. The active site involves tyrosine 73. Methionine 75 is a binding site for substrate. 77–90 (LGCLSPYRRLGIGT) provides a ligand contact to acetyl-CoA. Residue histidine 112 is part of the active site. Residue 117–126 (NNGAIEFYKK) coordinates CoA. The interval 138-141 (YYKR) is substrate. The span at 157–174 (TAPNSNSTATSTTANSNS) shows a compositional bias: low complexity. The interval 157–176 (TAPNSNSTATSTTANSNSRS) is disordered.

Belongs to the acetyltransferase family. As to quaternary structure, component of an acetyltransferase complex, at least composed of san, Ard1 and Nat1. In terms of processing, autoacetylated.

Its subcellular location is the cytoplasm. The enzyme catalyses N-terminal L-methionyl-L-alanyl-[protein] + acetyl-CoA = N-terminal N(alpha)-acetyl-L-methionyl-L-alanyl-[protein] + CoA + H(+). The catalysed reaction is N-terminal L-methionyl-L-seryl-[protein] + acetyl-CoA = N-terminal N(alpha)-acetyl-L-methionyl-L-seryl-[protein] + CoA + H(+). It carries out the reaction N-terminal L-methionyl-L-valyl-[protein] + acetyl-CoA = N-terminal N(alpha)-acetyl-L-methionyl-L-valyl-[protein] + CoA + H(+). It catalyses the reaction N-terminal L-methionyl-L-threonyl-[protein] + acetyl-CoA = N-terminal N(alpha)-acetyl-L-methionyl-L-threonyl-[protein] + CoA + H(+). The enzyme catalyses N-terminal L-methionyl-L-lysyl-[protein] + acetyl-CoA = N-terminal N(alpha)-acetyl-L-methionyl-L-lysyl-[protein] + CoA + H(+). The catalysed reaction is N-terminal L-methionyl-L-leucyl-[protein] + acetyl-CoA = N-terminal N(alpha)-acetyl-L-methionyl-L-leucyl-[protein] + CoA + H(+). It carries out the reaction N-terminal L-methionyl-L-phenylalanyl-[protein] + acetyl-CoA = N-terminal N(alpha)-acetyl-L-methionyl-L-phenylalanyl-[protein] + CoA + H(+). It catalyses the reaction N-terminal L-methionyl-L-tyrosyl-[protein] + acetyl-CoA = N-terminal N(alpha)-acetyl-L-methionyl-L-tyrosyl-[protein] + CoA + H(+). N-alpha-acetyltransferase that acetylates the N-terminus of proteins that retain their initiating methionine. Has a broad substrate specificity: able to acetylate the initiator methionine of most peptides. Also displays N-epsilon-acetyltransferase activity by mediating acetylation of the side chain of specific lysines on proteins. Autoacetylates. Required for the establishment of sister chromatid cohesion and couple the processes of cohesion and DNA replication to ensure that only sister chromatids become paired together. Required for the interaction between Scc1/vtd and SMC3, possibly by mediating N-terminal acetylation of Scc1/vtd. In terms of biological role, (Microbial infection) Required for optimal replication of E.chaffeensis in the immune tissues, hemocytes, and fat body. In Drosophila melanogaster (Fruit fly), this protein is Probable N-acetyltransferase san (san).